Here is a 411-residue protein sequence, read N- to C-terminus: Phosphoglycerate kinase (411 aa).

The disordered stretch occupies residues 1–24; the sequence is MTGLCPLHQPSPLDHPHSGGTPMQ. Substrate-binding positions include 41-43, arginine 56, 79-82, arginine 139, and arginine 172; these read DYN and HFGR. Residues lysine 222, glycine 310, glutamate 341, and 369–372 each bind ATP; that span reads GGDS.

The protein belongs to the phosphoglycerate kinase family. As to quaternary structure, monomer.

Its subcellular location is the cytoplasm. The catalysed reaction is (2R)-3-phosphoglycerate + ATP = (2R)-3-phospho-glyceroyl phosphate + ADP. The protein operates within carbohydrate degradation; glycolysis; pyruvate from D-glyceraldehyde 3-phosphate: step 2/5. The sequence is that of Phosphoglycerate kinase from Deinococcus radiodurans (strain ATCC 13939 / DSM 20539 / JCM 16871 / CCUG 27074 / LMG 4051 / NBRC 15346 / NCIMB 9279 / VKM B-1422 / R1).